The chain runs to 266 residues: NADH dehydrogenase [ubiquinone] iron-sulfur protein 3, mitochondrial (266 aa).

A mitochondrion-targeting transit peptide spans 1-38; sequence MAAAVAAAARGCWQRLVGSAAPARVAGRPSVLLLPVRR.

This sequence belongs to the complex I 30 kDa subunit family. In terms of assembly, core subunit of respiratory chain NADH dehydrogenase (Complex I) which is composed of 45 different subunits. Interacts with NDUFAF3. Interacts with RAB5IF. Found in subcomplexes containing subunits NDUFS2, MT-ND1 and NDUFA13.

The protein resides in the mitochondrion inner membrane. The enzyme catalyses a ubiquinone + NADH + 5 H(+)(in) = a ubiquinol + NAD(+) + 4 H(+)(out). Functionally, core subunit of the mitochondrial membrane respiratory chain NADH dehydrogenase (Complex I) which catalyzes electron transfer from NADH through the respiratory chain, using ubiquinone as an electron acceptor. Essential for the catalytic activity and assembly of complex I. The chain is NADH dehydrogenase [ubiquinone] iron-sulfur protein 3, mitochondrial (NDUFS3) from Bos taurus (Bovine).